A 399-amino-acid polypeptide reads, in one-letter code: Ectoine hydrolase (399 aa).

This sequence belongs to the peptidase M24 family.

Its subcellular location is the cytoplasm. It carries out the reaction L-ectoine + H2O = (2S)-2-acetamido-4-aminobutanoate. Involved in the degradation of ectoine, which allows H.elongata to utilize ectoine as both a carbon and a nitrogen source for growth. Catalyzes the hydrolysis of ectoine to N-acetyl-L-2,4-diaminobutyric acid (N-Ac-DABA). It can produce both isoforms N-gamma-acetyl-L-2,4-diaminobutyric acid (N-gamma-Ac-DABA) and N-alpha-acetyl-L-2,4-diaminobutyric acid (-Nalpha-Ac-DABA), however N-alpha-Ac-DABA is the essential substrate for the subsequent catabolic enzyme DoeB. This Halomonas elongata (strain ATCC 33173 / DSM 2581 / NBRC 15536 / NCIMB 2198 / 1H9) protein is Ectoine hydrolase.